Reading from the N-terminus, the 635-residue chain is Voltage-gated potassium channel KCNC4 (635 aa).

The interval 1–24 (MISSVCVSSYRGRKSGNKPPSKTC) is disordered. An inactivation gate region spans residues 1–28 (MISSVCVSSYRGRKSGNKPPSKTCLKEE). The Cytoplasmic segment spans residues 1–226 (MISSVCVSSY…EDPYSSRAAR (226 aa)). Phosphoserine occurs at positions 8, 9, 15, and 21. 4 residues coordinate Zn(2+): histidine 116, cysteine 122, cysteine 143, and cysteine 144. The disordered stretch occupies residues 160–180 (IFESPDGGGSGAGPSDEAGDD). Residues 227 to 247 (VVAFASLFFILVSITTFCLET) form a helical membrane-spanning segment. N-linked (GlcNAc...) asparagine glycosylation is found at asparagine 256 and asparagine 265. A helical transmembrane segment spans residues 278 to 298 (EPILTYIEGVCVLWFTLEFLV). Residues 299 to 312 (RIVCCPDTLDFVKN) are Cytoplasmic-facing. The helical transmembrane segment at 313–333 (LLNIIDFVAILPFYLEVGLSG) threads the bilayer. The helical; Voltage-sensor transmembrane segment at 345–364 (FLRVVRFVRILRIFKLTRHF) threads the bilayer. At 365 to 380 (VGLRVLGHTLRASTNE) the chain is on the cytoplasmic side. Residues 381–401 (FLLLIIFLALGVLIFATMIYY) form a helical membrane-spanning segment. The K(+) site is built by threonine 436, leucine 437, glycine 438, and tyrosine 439. Positions 436-441 (TLGYGD) match the Selectivity filter motif. Residues 452 to 472 (VGALCALAGVLTIAMPVPVIV) form a helical membrane-spanning segment. At 473-635 (NNFGMYYSLA…PTAGTLFLPH (163 aa)) the chain is on the cytoplasmic side. Residues 490–580 (KKRKKHVPRP…RRALRRSTTR (91 aa)) are disordered. The span at 527 to 542 (AREEGMIERKRADSKQ) shows a compositional bias: basic and acidic residues.

This sequence belongs to the potassium channel family. C (Shaw) (TC 1.A.1.2) subfamily. Kv3.4/KCNC4 sub-subfamily. In terms of assembly, homotetramer. Heterotetramer of potassium channel proteins. In terms of processing, phosphorylation of serine residues in the inactivation gate inhibits rapid channel closure.

The protein localises to the membrane. The catalysed reaction is K(+)(in) = K(+)(out). Functionally, voltage-gated potassium channel that opens in response to the voltage difference across the membrane, forming a potassium-selective channel through which potassium ions pass in accordance with their electrochemical gradient. The channel displays rapid activation and inactivation kinetics. The polypeptide is Voltage-gated potassium channel KCNC4 (Homo sapiens (Human)).